We begin with the raw amino-acid sequence, 179 residues long: Pyridoxal 5'-phosphate synthase subunit PdxT (179 aa).

48 to 50 provides a ligand contact to L-glutamine; that stretch reads GES. Cysteine 79 acts as the Nucleophile in catalysis. Residues arginine 101 and 127-128 each bind L-glutamine; that span reads IR. Catalysis depends on charge relay system residues histidine 163 and glutamate 165.

Belongs to the glutaminase PdxT/SNO family. In terms of assembly, in the presence of PdxS, forms a dodecamer of heterodimers. Only shows activity in the heterodimer.

It carries out the reaction aldehydo-D-ribose 5-phosphate + D-glyceraldehyde 3-phosphate + L-glutamine = pyridoxal 5'-phosphate + L-glutamate + phosphate + 3 H2O + H(+). The catalysed reaction is L-glutamine + H2O = L-glutamate + NH4(+). Its pathway is cofactor biosynthesis; pyridoxal 5'-phosphate biosynthesis. Its function is as follows. Catalyzes the hydrolysis of glutamine to glutamate and ammonia as part of the biosynthesis of pyridoxal 5'-phosphate. The resulting ammonia molecule is channeled to the active site of PdxS. In Francisella philomiragia subsp. philomiragia (strain ATCC 25017 / CCUG 19701 / FSC 153 / O#319-036), this protein is Pyridoxal 5'-phosphate synthase subunit PdxT.